The sequence spans 314 residues: tRNA dimethylallyltransferase (314 aa).

11-18 (GPTGSGKT) is an ATP binding site. 13 to 18 (TGSGKT) is a substrate binding site. Residues 36 to 39 (DSMQ) form an interaction with substrate tRNA region.

Belongs to the IPP transferase family. In terms of assembly, monomer. Mg(2+) is required as a cofactor.

The enzyme catalyses adenosine(37) in tRNA + dimethylallyl diphosphate = N(6)-dimethylallyladenosine(37) in tRNA + diphosphate. Catalyzes the transfer of a dimethylallyl group onto the adenine at position 37 in tRNAs that read codons beginning with uridine, leading to the formation of N6-(dimethylallyl)adenosine (i(6)A). The sequence is that of tRNA dimethylallyltransferase from Chlamydia trachomatis serovar D (strain ATCC VR-885 / DSM 19411 / UW-3/Cx).